The sequence spans 347 residues: UDP-3-O-acylglucosamine N-acyltransferase (347 aa).

The active-site Proton acceptor is His-248.

Belongs to the transferase hexapeptide repeat family. LpxD subfamily. In terms of assembly, homotrimer.

It carries out the reaction a UDP-3-O-[(3R)-3-hydroxyacyl]-alpha-D-glucosamine + a (3R)-hydroxyacyl-[ACP] = a UDP-2-N,3-O-bis[(3R)-3-hydroxyacyl]-alpha-D-glucosamine + holo-[ACP] + H(+). It participates in bacterial outer membrane biogenesis; LPS lipid A biosynthesis. In terms of biological role, catalyzes the N-acylation of UDP-3-O-acylglucosamine using 3-hydroxyacyl-ACP as the acyl donor. Is involved in the biosynthesis of lipid A, a phosphorylated glycolipid that anchors the lipopolysaccharide to the outer membrane of the cell. In Synechococcus sp. (strain CC9902), this protein is UDP-3-O-acylglucosamine N-acyltransferase.